The sequence spans 551 residues: CTP synthase (551 aa).

The segment at 1–267 (MPKYVFVTGG…GRYVMEHLGW (267 aa)) is amidoligase domain. Ser-13 is a CTP binding site. Ser-13 is a UTP binding site. 14-19 (SVGKGI) lines the ATP pocket. An L-glutamine-binding site is contributed by Tyr-54. Asp-71 contacts ATP. Residues Asp-71 and Glu-141 each coordinate Mg(2+). Residues 148–150 (DIE), 188–193 (KTKPTQ), and Lys-224 each bind CTP. Residues 188 to 193 (KTKPTQ) and Lys-224 each bind UTP. Positions 292–532 (RIALVGKYVE…IGVAKHVLRE (241 aa)) constitute a Glutamine amidotransferase type-1 domain. Gly-353 provides a ligand contact to L-glutamine. The active-site Nucleophile; for glutamine hydrolysis is Cys-380. L-glutamine-binding positions include 381-384 (YGLH), Glu-404, and Arg-460. Catalysis depends on residues His-505 and Glu-507.

Belongs to the CTP synthase family. In terms of assembly, homotetramer.

It catalyses the reaction UTP + L-glutamine + ATP + H2O = CTP + L-glutamate + ADP + phosphate + 2 H(+). The catalysed reaction is L-glutamine + H2O = L-glutamate + NH4(+). The enzyme catalyses UTP + NH4(+) + ATP = CTP + ADP + phosphate + 2 H(+). Its pathway is pyrimidine metabolism; CTP biosynthesis via de novo pathway; CTP from UDP: step 2/2. Allosterically activated by GTP, when glutamine is the substrate; GTP has no effect on the reaction when ammonia is the substrate. The allosteric effector GTP functions by stabilizing the protein conformation that binds the tetrahedral intermediate(s) formed during glutamine hydrolysis. Inhibited by the product CTP, via allosteric rather than competitive inhibition. Functionally, catalyzes the ATP-dependent amination of UTP to CTP with either L-glutamine or ammonia as the source of nitrogen. Regulates intracellular CTP levels through interactions with the four ribonucleotide triphosphates. This Thermomicrobium roseum (strain ATCC 27502 / DSM 5159 / P-2) protein is CTP synthase.